The chain runs to 385 residues: Probable protein phosphatase 2C 38 (385 aa).

In terms of domain architecture, PPM-type phosphatase spans 46–357; sequence VAGEFSMSVI…DDITVIVVFL (312 aa). Phosphoserine is present on S77. Positions 88, 89, 289, and 348 each coordinate Mn(2+).

It belongs to the PP2C family. Interacts with BIK1. Mg(2+) serves as cofactor. Requires Mn(2+) as cofactor. Post-translationally, phosphorylation at Ser-77 induces dissociation of PP2C38 from BIK1.

It is found in the cell membrane. The catalysed reaction is O-phospho-L-seryl-[protein] + H2O = L-seryl-[protein] + phosphate. It catalyses the reaction O-phospho-L-threonyl-[protein] + H2O = L-threonyl-[protein] + phosphate. In terms of biological role, may dephosphorylate and repress plasma membrane H(+)-ATPases (PM H(+)-ATPases, e.g. AHA1 and AHA2), thus influencing negatively plant growth and fitness. Involved in pathogen-associated molecular pattern (PAMP)-triggered immunity (PTI) signaling. Negatively regulates immune responses by controlling the phosphorylation and activation status of BIK1, a central rate-limiting kinase in PTI signaling. Impairs the phosphorylation of the NADPH oxidase RBOHD by BIK1. This Arabidopsis thaliana (Mouse-ear cress) protein is Probable protein phosphatase 2C 38.